We begin with the raw amino-acid sequence, 316 residues long: 4-diphosphocytidyl-2-C-methyl-D-erythritol kinase (316 aa).

Lys23 is a catalytic residue. ATP is bound at residue 108-118 (PVAGGMAGGSA). Asp150 is an active-site residue.

The protein belongs to the GHMP kinase family. IspE subfamily.

It carries out the reaction 4-CDP-2-C-methyl-D-erythritol + ATP = 4-CDP-2-C-methyl-D-erythritol 2-phosphate + ADP + H(+). The protein operates within isoprenoid biosynthesis; isopentenyl diphosphate biosynthesis via DXP pathway; isopentenyl diphosphate from 1-deoxy-D-xylulose 5-phosphate: step 3/6. Its function is as follows. Catalyzes the phosphorylation of the position 2 hydroxy group of 4-diphosphocytidyl-2C-methyl-D-erythritol. This chain is 4-diphosphocytidyl-2-C-methyl-D-erythritol kinase, found in Mycolicibacterium paratuberculosis (strain ATCC BAA-968 / K-10) (Mycobacterium paratuberculosis).